The following is a 201-amino-acid chain: Adenylyl-sulfate kinase (201 aa).

Residue 35-42 (GLSGSGKS) coordinates ATP. Ser-109 (phosphoserine intermediate) is an active-site residue.

It belongs to the APS kinase family.

The enzyme catalyses adenosine 5'-phosphosulfate + ATP = 3'-phosphoadenylyl sulfate + ADP + H(+). The protein operates within sulfur metabolism; hydrogen sulfide biosynthesis; sulfite from sulfate: step 2/3. In terms of biological role, catalyzes the synthesis of activated sulfate. This Enterobacter sp. (strain 638) protein is Adenylyl-sulfate kinase.